The primary structure comprises 612 residues: Proton pump-interactor 1 (612 aa).

Residues 1 to 58 (MGVEVVNSGGFEVAPAPFEGKPEKNGKLDQGKGDDAPINFGSVGELPKNAEENNNKVV) form a disordered region. Residues 20-35 (GKPEKNGKLDQGKGDD) show a composition bias toward basic and acidic residues. Coiled-coil stretches lie at residues 90-113 (PKIKAKLDLADKELEKLNKARTGV) and 251-314 (LDGV…NSEY). Basic and acidic residues-rich tracts occupy residues 374-387 (LSRDGRMRNPDEKP), 434-446 (EKAKDAVKVKNVA), 459-498 (PQKEEKPVDAATAKEMRKQEEIAKAKQAMERKKKLAEKAA), and 505-519 (AQKEAEKKEKKEQEK). The segment at 374-572 (LSRDGRMRNP…PIRNRTRGRG (199 aa)) is disordered. A coiled-coil region spans residues 466–526 (VDAATAKEMR…QEKKAKKKTG (61 aa)). A compositionally biased stretch (acidic residues) spans 531–545 (TETEEVPEASEEEIE). Ser-540 is modified (phosphoserine). The span at 549–564 (QEEKPQKEKVFKEKPI) shows a compositional bias: basic and acidic residues. Residues 591–611 (VYAAPAALVVLLLLVLGYYYV) traverse the membrane as a helical segment.

This sequence belongs to the plant Proton pump-interactor protein family. Interacts with AHA1 via N-terminal region. As to expression, strongly expressed in root and shoot vascular systems, particularly in meristematic and sink tissues. Also present in pollen, stigmas and siliques, but not in developing embryos.

The protein resides in the cell membrane. It is found in the endoplasmic reticulum membrane. In terms of biological role, promotes AHA1 plasma membrane ATPase activity by binding to a site different from the 14-3-3 binding site. The polypeptide is Proton pump-interactor 1 (PPI1) (Arabidopsis thaliana (Mouse-ear cress)).